The sequence spans 419 residues: 26S proteasome regulatory subunit 8 homolog A (419 aa).

Position 2 is an N-acetylalanine (alanine 2). Residue 202–209 (GPPGTGKT) participates in ATP binding. A Glycyl lysine isopeptide (Lys-Gly) (interchain with G-Cter in ubiquitin) cross-link involves residue lysine 406.

The protein belongs to the AAA ATPase family. In terms of assembly, component of the 19S regulatory particle (RP/PA700) base subcomplex of the 26S proteasome. The 26S proteasome is composed of a core protease (CP), known as the 20S proteasome, capped at one or both ends by the 19S regulatory particle (RP/PA700). The RP/PA700 complex is composed of at least 17 different subunits in two subcomplexes, the base and the lid, which form the portions proximal and distal to the 20S proteolytic core, respectively.

The protein localises to the cytoplasm. The protein resides in the nucleus. In terms of biological role, the 26S proteasome is involved in the ATP-dependent degradation of ubiquitinated proteins. The regulatory (or ATPase) complex confers ATP dependency and substrate specificity to the 26S complex. In Arabidopsis thaliana (Mouse-ear cress), this protein is 26S proteasome regulatory subunit 8 homolog A (RPT6A).